The chain runs to 357 residues: Olfactory receptor 2B2 (357 aa).

Over 1 to 25 the chain is Extracellular; that stretch reads MNWVNKSVPQEFILLVFSDQPWLEI. Residue Asn5 is glycosylated (N-linked (GlcNAc...) asparagine). A helical transmembrane segment spans residues 26 to 49; it reads PPFVMFLFSYILTIFGNLTIILVS. The Cytoplasmic portion of the chain corresponds to 50–57; the sequence is HVDFKLHT. A helical transmembrane segment spans residues 58–79; the sequence is PMYFFLSNLSLLDLCYTTSTVP. Over 80 to 100 the chain is Extracellular; the sequence is QMLVNICNTRKVISYGGCVAQ. Residues Cys97 and Cys189 are joined by a disulfide bond. The chain crosses the membrane as a helical span at residues 101–120; sequence LFIFLALGSTECLLLAVMCF. Over 121–139 the chain is Cytoplasmic; sequence DRFVAICRPLHYSIIMHQR. A helical membrane pass occupies residues 140–158; it reads LCFQLAAASWISGFSNSVL. Residues 159–195 are Extracellular-facing; sequence QSTWTLKMPLCGHKEVDHFFCEVPALLKLSCVDTTAN. Residues 196-219 traverse the membrane as a helical segment; the sequence is EAELFFISVLFLLIPVTLILISYA. The Cytoplasmic portion of the chain corresponds to 220-236; sequence FIVQAVLRIQSAEGQRK. The helical transmembrane segment at 237-259 threads the bilayer; that stretch reads AFGTCGSHLIVVSLFYGTAISMY. Residues 260 to 272 lie on the Extracellular side of the membrane; the sequence is LQPPSPSSKDRGK. The helical transmembrane segment at 273 to 292 threads the bilayer; sequence MVSLFCGIIAPMLNPLIYTL. Residues 293–357 are Cytoplasmic-facing; it reads RNKEVKEAFK…YCNLPQRKFP (65 aa).

The protein belongs to the G-protein coupled receptor 1 family.

It localises to the cell membrane. Its function is as follows. Odorant receptor. The chain is Olfactory receptor 2B2 (OR2B2) from Homo sapiens (Human).